The chain runs to 272 residues: uncharacterized protein (272 aa).

This is an uncharacterized protein from Saccharomyces cerevisiae (strain ATCC 204508 / S288c) (Baker's yeast).